Consider the following 329-residue polypeptide: MITTLLRRSLLDASKQATSINGILFHQLAPAKYFRVPAVGGLRDFSKMTFEKKKTSEEEEGSGDGVKVNDQGNKGEQLIVSYWGVKPMKITKEDGTEWKWSCFRPWETYKADLTIDLKKHHVPSTLPDKIAYWMVKSLRWPTDLFFQRRYGCRAIMLETVAAVPGMVGGMLMHFKSLRRFEQSGGWIKALLEEAENERMHLMTFMEVAKPKWYERALVISVQGVFFNAYLIGYIISPKFAHRMVGYLEEEAIHSYTEFLKELDNGNIENVPAPAIAVDYWRLEADATLRDVVMVVRADEAHHRDVNHYASDIHYQGHELKEAPAPIGYH.

A mitochondrion-targeting transit peptide spans 1–45 (MITTLLRRSLLDASKQATSINGILFHQLAPAKYFRVPAVGGLRDF). The helical transmembrane segment at 154–174 (AIMLETVAAVPGMVGGMLMHF) threads the bilayer. Residues E158, E197, and H200 each contribute to the Fe cation site. Residues 216-236 (ALVISVQGVFFNAYLIGYIIS) traverse the membrane as a helical segment. Fe cation-binding residues include E248, E299, and H302.

The protein belongs to the alternative oxidase family. Homodimer; disulfide-linked. It depends on Fe cation as a cofactor. In terms of tissue distribution, expressed in roots, stems, leaves, cotyledons and flowers. High expression in stamens.

It is found in the mitochondrion inner membrane. It carries out the reaction 2 a ubiquinol + O2 = 2 a ubiquinone + 2 H2O. In terms of biological role, catalyzes the cyanide-resistant oxidation of ubiquinol and the reduction of molecular oxygen to water, but does not translocate protons and consequently is not linked to oxidative phosphorylation. May increase respiration when the cytochrome respiratory pathway is restricted, or in response to low temperatures. This Arabidopsis thaliana (Mouse-ear cress) protein is Ubiquinol oxidase 1c, mitochondrial (AOX1C).